Reading from the N-terminus, the 822-residue chain is MTDTRRRVKVYTLNEDRQWDDRGTGHVSSGYVERLKGMSLLVRAESDGSLLLESKINTNTAYQKQQDTLIVWSEAENYDLALSFQEKAGCDEIWEKICQVQGKDPSVDITQDLVDESEEERFDDMSSPGLELPSCELSRLEEIAEVVASSLPSPLRREKLAVALENEGYLKKLLELFHVCEDLENIEGLHHLYEVIKGIFLLNRTALFEVMFSEDCMMDIIGCLEYDPSLPTQRKHREFLTKTAKFKEVIPISDPELKQKIHQTYRVQYIQDVVLPTPSVFEENMLSTLHSFIFFNKVEIVGMLQEDEKFLTELFAHLTDEATDDEKRQELVNFLKEFCAFSQTLQPQNRDAFFKTLSNMGILPALEVILGMDDPQVRSAATDIFSYLVEYNPSMVREFVMQEAQQNDDDILLINLIIEHMICDTDPELGGAVQLTGLLRTLVDPENMLATTNKTEKTEFLGFFYKHCMHVLTAPLLANTTEEKPSKDDFQAAQLLALILELLTFCVEHHTYHIKNYIINKDILRRVLVLMSSMHSFLGLCALRFMRKIVGLKDEFYNRYIVKSFLFEPVVKAFLNNGSRYNLMNSAILEIFEYIRVEDIKSLTAHVVENYWKALEDVEYVQTFKGLKLRYDQQRERQDNPKLDSMRSILRNHRYRRDARSIEDEEEMWFNTDEDDLEDGEPVVLPSEKIKNSEDLMDPISKFMERKKLKESEEKEVLLKTNLTGRQSPNFKLSFSGATKTNLTSQLSASGHPGSPGSPGSPGSPESPGSVSKSTPQAAAITTKGGLIGLVDYPDDDEEDDDNDEEEKEERLPLTKKARLGS.

Residues 1-100 (MTDTRRRVKV…DEIWEKICQV (100 aa)) form the WH1 domain. The segment at 744 to 822 (TSQLSASGHP…PLTKKARLGS (79 aa)) is disordered. Positions 761-774 (SPGSPESPGSVSKS) are enriched in low complexity. The span at 793-808 (YPDDDEEDDDNDEEEK) shows a compositional bias: acidic residues.

Belongs to the SMEK family. As to quaternary structure, serine/threonine-protein phosphatase 4 (PP4) occurs in different assemblies of the catalytic and one or more regulatory subunits.

Functionally, regulatory subunit of serine/threonine-protein phosphatase 4. This Xenopus laevis (African clawed frog) protein is Serine/threonine-protein phosphatase 4 regulatory subunit 3 (smek1).